Reading from the N-terminus, the 879-residue chain is Alanine--tRNA ligase (879 aa).

Residues H566, H570, C668, and H672 each contribute to the Zn(2+) site.

This sequence belongs to the class-II aminoacyl-tRNA synthetase family. Zn(2+) is required as a cofactor.

The protein localises to the cytoplasm. The catalysed reaction is tRNA(Ala) + L-alanine + ATP = L-alanyl-tRNA(Ala) + AMP + diphosphate. Its function is as follows. Catalyzes the attachment of alanine to tRNA(Ala) in a two-step reaction: alanine is first activated by ATP to form Ala-AMP and then transferred to the acceptor end of tRNA(Ala). Also edits incorrectly charged Ser-tRNA(Ala) and Gly-tRNA(Ala) via its editing domain. The sequence is that of Alanine--tRNA ligase from Clostridium beijerinckii (strain ATCC 51743 / NCIMB 8052) (Clostridium acetobutylicum).